The following is a 767-amino-acid chain: Serine/threonine-protein kinase DCLK2 (767 aa).

A disordered region spans residues 1–44; the sequence is MASTRSIELEHFEERDKRPRPGSRRGAPSSSGGSSISGPKGNGL. A compositionally biased stretch (basic and acidic residues) spans 7–19; the sequence is IELEHFEERDKRP. The span at 24–43 shows a compositional bias: low complexity; that stretch reads RRGAPSSSGGSSISGPKGNG. Phosphothreonine is present on Thr-61. 2 consecutive Doublecortin domains span residues 72 to 158 and 196 to 279; these read KKAR…VDYT and KLVT…AQDD. Residues 301-311 are compositionally biased toward low complexity; the sequence is KYSGSRSPGLS. The tract at residues 301-391 is disordered; the sequence is KYSGSRSPGL…GPELDRCMSP (91 aa). Residues 327–338 show a composition bias toward polar residues; it reads SAYSTAKSPVNG. Positions 339–362 are enriched in low complexity; sequence TPSSQLSTPKSTKSSSSSPTSPGS. The segment covering 369–380 has biased composition (polar residues); sequence ISAQGRSSSNVN. Ser-377 is subject to Phosphoserine. The Protein kinase domain maps to 409-666; it reads YRIGKVIGDG…AGEILSHPWV (258 aa). Residues 415–423 and Lys-438 each bind ATP; that span reads IGDGNFAVV. Asp-530 (proton acceptor) is an active-site residue. The residue at position 662 (Ser-662) is a Phosphoserine. Residue Thr-681 is modified to Phosphothreonine. The span at 721–734 shows a compositional bias: basic and acidic residues; sequence HCRDSSKSSREQTS. Positions 721–767 are disordered; the sequence is HCRDSSKSSREQTSAREAPPPPESPRPPGPPATSGCDPAGTWRRHRD. The segment covering 738-751 has biased composition (pro residues); that stretch reads APPPPESPRPPGPP.

The protein belongs to the protein kinase superfamily. CAMK Ser/Thr protein kinase family. CaMK subfamily. Interacts with MAPK8IP1/JIP-1, MAPK8IP2/JIP-2, MAPK9/JNK2, PPP1R9B/NEURABIN-2 and actin. Binds to and stabilizes microtubules; binding affinity is strongly reduced by autophosphorylation. Autophosphorylated.

It localises to the cytoplasm. Its subcellular location is the cytoskeleton. The enzyme catalyses L-seryl-[protein] + ATP = O-phospho-L-seryl-[protein] + ADP + H(+). The catalysed reaction is L-threonyl-[protein] + ATP = O-phospho-L-threonyl-[protein] + ADP + H(+). Its function is as follows. Protein kinase with a significantly reduced Ca(2+)+/CAM affinity and dependence compared to other members of the CaMK family. May play a role in the down-regulation of CRE-dependent gene activation probably by phosphorylation of the CREB coactivator CRTC2/TORC2 and the resulting retention of TORC2 in the cytoplasm. The protein is Serine/threonine-protein kinase DCLK2 (Dclk2) of Rattus norvegicus (Rat).